We begin with the raw amino-acid sequence, 119 residues long: uncharacterized protein (119 aa).

This is an uncharacterized protein from Schizosaccharomyces pombe (strain 972 / ATCC 24843) (Fission yeast).